An 855-amino-acid polypeptide reads, in one-letter code: DNA mismatch repair protein MutS (855 aa).

616–623 contacts ATP; that stretch reads GPNMGGKS.

It belongs to the DNA mismatch repair MutS family.

In terms of biological role, this protein is involved in the repair of mismatches in DNA. It is possible that it carries out the mismatch recognition step. This protein has a weak ATPase activity. This is DNA mismatch repair protein MutS from Salmonella paratyphi C (strain RKS4594).